We begin with the raw amino-acid sequence, 57 residues long: Small polypeptide DEVIL 20 (57 aa).

A glycan (N-linked (GlcNAc...) asparagine) is linked at Asn5. The segment at 16 to 47 is required for DVL/RTFL small polypeptide activity; it reads TFKAKCSHMVRKQRAKFYILGRCLAMLVCGRG. The helical transmembrane segment at 29 to 45 threads the bilayer; that stretch reads RAKFYILGRCLAMLVCG.

This sequence belongs to the DVL/RTFL small polypeptides family.

The protein localises to the cell membrane. Small polypeptide acting as a regulatory molecule which coordinates cellular responses required for differentiation, growth and development, probably by restricting polar cell proliferation in lateral organs and coordinating socket cell recruitment and differentiation at trichome sites. The chain is Small polypeptide DEVIL 20 from Arabidopsis thaliana (Mouse-ear cress).